The primary structure comprises 919 residues: UPF0182 protein Tery_4385 (919 aa).

Helical transmembrane passes span Y6 to V26, I52 to I72, I96 to A116, W160 to G180, T198 to E218, F243 to V263, and I268 to L288.

This sequence belongs to the UPF0182 family.

Its subcellular location is the cell membrane. The protein is UPF0182 protein Tery_4385 of Trichodesmium erythraeum (strain IMS101).